We begin with the raw amino-acid sequence, 218 residues long: 2-phospho-L-lactate guanylyltransferase (218 aa).

This sequence belongs to the CofC family. Homodimer.

The catalysed reaction is (2S)-2-phospholactate + GTP + H(+) = (2S)-lactyl-2-diphospho-5'-guanosine + diphosphate. It participates in cofactor biosynthesis; coenzyme F420 biosynthesis. Its function is as follows. Guanylyltransferase that catalyzes the activation of (2S)-2-phospholactate (2-PL) as (2S)-lactyl-2-diphospho-5'-guanosine, via the condensation of 2-PL with GTP. It is involved in the biosynthesis of coenzyme F420, a hydride carrier cofactor. In Methanocaldococcus fervens (strain DSM 4213 / JCM 15782 / AG86) (Methanococcus fervens), this protein is 2-phospho-L-lactate guanylyltransferase.